The chain runs to 307 residues: Agmatinase (307 aa).

His-128, Asp-151, His-153, Asp-155, Asp-232, and Asp-234 together coordinate Mn(2+).

This sequence belongs to the arginase family. Agmatinase subfamily. Mn(2+) is required as a cofactor.

It catalyses the reaction agmatine + H2O = urea + putrescine. It participates in amine and polyamine biosynthesis; putrescine biosynthesis via agmatine pathway; putrescine from agmatine: step 1/1. Functionally, catalyzes the formation of putrescine from agmatine. The chain is Agmatinase from Photorhabdus laumondii subsp. laumondii (strain DSM 15139 / CIP 105565 / TT01) (Photorhabdus luminescens subsp. laumondii).